The sequence spans 390 residues: Pyruvate dehydrogenase E1 component subunit alpha, somatic form, mitochondrial (390 aa).

A mitochondrion-targeting transit peptide spans 1-29 (MRKMLAAVSRVLSGASQKPASRVLVASRN). Lys-63 is subject to N6-acetyllysine; alternate. Lys-63 carries the post-translational modification N6-succinyllysine; alternate. Residues His-92, Tyr-118, Arg-119, Ala-157, Gly-165, Val-167, Asp-196, Gly-197, Ala-198, Asn-225, and Tyr-227 each coordinate pyruvate. Thiamine diphosphate contacts are provided by Tyr-118 and Arg-119. Residues Gly-165, Val-167, Asp-196, Gly-197, Ala-198, and Asn-225 each coordinate thiamine diphosphate. Position 196 (Asp-196) interacts with Mg(2+). Residues Asn-225 and Tyr-227 each coordinate Mg(2+). Position 232 is a phosphoserine; by PDK1 (Ser-232). At Lys-244 the chain carries N6-acetyllysine; alternate. Lys-244 is modified (N6-succinyllysine; alternate). Lys-277 carries the post-translational modification N6-succinyllysine. His-292 contributes to the thiamine diphosphate binding site. Ser-293 is modified (phosphoserine; by PDK1, PDK2, PDK3 and PDK4). Position 295 is a phosphoserine (Ser-295). Position 300 is a phosphoserine; by PDK1, PDK2, PDK3 and PDK4 (Ser-300). Tyr-301 is subject to Phosphotyrosine. Lys-313 is modified (N6-acetyllysine; alternate). Lys-313 is subject to N6-succinyllysine; alternate. Residues Lys-321 and Lys-336 each carry the N6-acetyllysine modification. The residue at position 385 (Lys-385) is an N6-succinyllysine.

As to quaternary structure, heterotetramer of two PDHA1 and two PDHB subunits. The heterotetramer interacts with DLAT, and is part of the multimeric pyruvate dehydrogenase complex that contains multiple copies of pyruvate dehydrogenase (E1), dihydrolipoamide acetyltransferase (DLAT, E2) and lipoamide dehydrogenase (DLD, E3). These subunits are bound to an inner core composed of about 48 DLAT and 12 PDHX molecules. Requires thiamine diphosphate as cofactor. The cofactor is Mg(2+). Post-translationally, phosphorylation at Ser-232, Ser-293 and Ser-300 by PDK family kinases inactivates the enzyme; for this phosphorylation at a single site is sufficient. Dephosphorylation at all three sites, i.e. at Ser-232, Ser-293 and Ser-300, is required for reactivation. Acetylation alters the phosphorylation pattern. Deacetylated by SIRT3. Ubiquitous.

The protein resides in the mitochondrion matrix. It carries out the reaction N(6)-[(R)-lipoyl]-L-lysyl-[protein] + pyruvate + H(+) = N(6)-[(R)-S(8)-acetyldihydrolipoyl]-L-lysyl-[protein] + CO2. Pyruvate dehydrogenase activity is inhibited by phosphorylation of PDHA1; it is reactivated by dephosphorylation. In terms of biological role, the pyruvate dehydrogenase complex catalyzes the overall conversion of pyruvate to acetyl-CoA and CO(2), and thereby links the glycolytic pathway to the tricarboxylic cycle. This chain is Pyruvate dehydrogenase E1 component subunit alpha, somatic form, mitochondrial (PDHA1), found in Homo sapiens (Human).